A 358-amino-acid polypeptide reads, in one-letter code: 3-dehydroquinate synthase (358 aa).

NAD(+) is bound by residues 104-108, 128-129, Lys-140, Lys-149, and 167-170; these read GVIGD, TT, and FLNT. Glu-182, His-246, and His-260 together coordinate Zn(2+).

It belongs to the sugar phosphate cyclases superfamily. Dehydroquinate synthase family. Co(2+) is required as a cofactor. It depends on Zn(2+) as a cofactor. NAD(+) serves as cofactor.

It is found in the cytoplasm. It catalyses the reaction 7-phospho-2-dehydro-3-deoxy-D-arabino-heptonate = 3-dehydroquinate + phosphate. Its pathway is metabolic intermediate biosynthesis; chorismate biosynthesis; chorismate from D-erythrose 4-phosphate and phosphoenolpyruvate: step 2/7. In terms of biological role, catalyzes the conversion of 3-deoxy-D-arabino-heptulosonate 7-phosphate (DAHP) to dehydroquinate (DHQ). The polypeptide is 3-dehydroquinate synthase (Staphylococcus carnosus (strain TM300)).